We begin with the raw amino-acid sequence, 500 residues long: L-arabinose isomerase (500 aa).

Mn(2+)-binding residues include Glu-306, Glu-333, His-350, and His-450.

It belongs to the arabinose isomerase family. In terms of assembly, homohexamer. The cofactor is Mn(2+).

It carries out the reaction beta-L-arabinopyranose = L-ribulose. The protein operates within carbohydrate degradation; L-arabinose degradation via L-ribulose; D-xylulose 5-phosphate from L-arabinose (bacterial route): step 1/3. In terms of biological role, catalyzes the conversion of L-arabinose to L-ribulose. The protein is L-arabinose isomerase of Shigella dysenteriae serotype 1 (strain Sd197).